A 1012-amino-acid polypeptide reads, in one-letter code: MGVPSFYRWLIQRYPLTIQEVIEEEPLEVNGGGVTIPIDSSKPNPNGYEYDNLYLDMNGIIHPCFHPEDKPSPTTFTEVFQCMFDYIDRLFVMVRPRKLLFMAIDGVAPRAKMNQQRARRFRAAKDAAEAAAEEEQLREEFEREGKKLPPKVDSQVFDSNVITPGTEFMATLSFALRYYIHVRLNSDPGWKNIKVILSDANVPGEGEHKIMSYIRCNKNHPGYNPNTHHCLYGLDADLIMLSLATHEIHFSILREVVFFPGEEGKCFLCGQEGHRAADCEGKIKRKTGEMLDNTEADVVVKKPYEFVNIWILREYLEHDMQIPGAKKNLDRLIDDFIFICFFVGNDFLPHMPTLEIREGAIELLMSVYKNKFRSAKKYLTDSSKLNLRNVERFIKAVGMYENQIFQKRAQVQQRQSERFRRDKARDKARDNARDNAQASRQFSGKLVQLDSLDEVSDSLHSSPSRKYLRLSLDDNIGVANVETENSLKAEELDNEEDLKFKLKKLLRDKGDGFRSGNGEQDKVKLNKVGWRERYYEEKFAAKSVEEMEQIRRDVVLKYTEGLCWIMHYYYHGVCSWNWFYPYHYAPFASDLKGLEKLDIKFELGSPFKPFNQLLAVLPSASAHALPECYRSLMTNPDSPIADFYPADFEIDMNGKRYSWQGISKLPFVEEKRLLEAAAQVEKSLTNEEIRRNSALFDMLFVVASHPLGELIRSLNSRTNNLSNEERATIIEKIDPGLSDGMNGYIASCGGDSQPSCFCSTVEGMEDVLTNQVICAIYKLPEDIRGSEITHQIPRLAIPKKTISLVDLKSGGLLWHEDGDKRRAPPKVIKIKRYNPEGSISGGRLGKASHRLVLQTINAQPDYMNINSEPALCPNTVFQNERVPKKIPTFKDNGIQWISPPPSQITPKKMNSPQRQKAWKKDETPQSREKSKKLKSSLKVNPLKMKKTKSPQREFTREKKKENITPQRKLTKAQRQVKHIRMMEEAKMIKQRKKEKYLRKKAKYAQGAPPKTA.

Residues 264–281 form a CCHC-type zinc finger; sequence GKCFLCGQEGHRAADCEG. Disordered stretches follow at residues 411–439, 888–976, and 990–1012; these read VQQR…AQAS, TFKD…QRQV, and QRKK…PKTA. The segment covering 415 to 433 has biased composition (basic and acidic residues); it reads QSERFRRDKARDKARDNAR. Residues 904–914 are compositionally biased toward polar residues; it reads ITPKKMNSPQR. 2 stretches are compositionally biased toward basic and acidic residues: residues 918-928 and 950-962; these read WKKDETPQSRE and PQRE…KKEN. The span at 990–1002 shows a compositional bias: basic residues; that stretch reads QRKKEKYLRKKAK.

It belongs to the 5'-3' exonuclease family. XRN2/RAT1 subfamily. As to expression, expressed in roots, leaves, stems and flowers.

Its subcellular location is the nucleus. Functionally, possesses 5'-&gt;3' exoribonuclease activity. Acts as an endogenous post-transcriptional gene silencing (PTGS) suppressor. Degrades miRNA-derived loops, excised during miRNA maturation in the nucleus. Involved in pre-rRNA processing. Involved in the primary exonucleolytic shortening of the 5' external transcribed spacer (5'ETS), required for endonucleolytic processing at site P by the U3 snoRNP complex. Involved with XRN3 in the 5'-end processing of 5.8S and 25S rRNAs. Contributes with XRN3 to polyadenylation-dependent nuclear RNA surveillance. Involved in the degradation of aberrant polyadenylated pre-rRNA through 5'-end processing. The protein is 5'-3' exoribonuclease 2 of Arabidopsis thaliana (Mouse-ear cress).